The sequence spans 338 residues: Heme-dependent oxidative N-demethylase alpha subunit (338 aa).

Heme b is bound by residues Tyr38 and His194. The active-site Proton donor is the Arg224. A heme b-binding site is contributed by Asn226. Glu266 contributes to the dimethylamine binding site. Heme b contacts are provided by Tyr317 and Lys318.

As to quaternary structure, the heme-dependent oxidative N-demethylase (HODM) is a heterotetramer composed of a catalytic alpha subunit, a FMN/2Fe-2S-dependent oxidoreductase beta subunit, a gamma subunit with putative aminotransferase activity, and a delta subunit of unknown function.

The catalysed reaction is dimethylamine + NADPH + O2 + H(+) = methylamine + formaldehyde + NADP(+) + H2O. Component of the heme-dependent oxidative N-demethylase (HODM) enzyme, that catalyzes the NADPH-dependent oxidation of dimethylamine (DMA) to methylamine (MA) and formaldehyde. Functions in bacterial methylated amine catabolism, linking alkylamine oxidation to the tetrahydrofolate C1 pool. The alpha subunit of HODM binds heme, oxygen and DMA, and serves as the site of the oxidative N-demethylase activity. This chain is Heme-dependent oxidative N-demethylase alpha subunit, found in Ectopseudomonas mendocina (strain ymp) (Pseudomonas mendocina).